A 282-amino-acid chain; its full sequence is Thiazole synthase (282 aa).

Catalysis depends on lysine 113, which acts as the Schiff-base intermediate with DXP. Residues glycine 174, 201–202 (AG), and 223–224 (NT) each bind 1-deoxy-D-xylulose 5-phosphate.

The protein belongs to the ThiG family. Homotetramer. Forms heterodimers with either ThiH or ThiS.

It is found in the cytoplasm. The catalysed reaction is [ThiS sulfur-carrier protein]-C-terminal-Gly-aminoethanethioate + 2-iminoacetate + 1-deoxy-D-xylulose 5-phosphate = [ThiS sulfur-carrier protein]-C-terminal Gly-Gly + 2-[(2R,5Z)-2-carboxy-4-methylthiazol-5(2H)-ylidene]ethyl phosphate + 2 H2O + H(+). The protein operates within cofactor biosynthesis; thiamine diphosphate biosynthesis. Catalyzes the rearrangement of 1-deoxy-D-xylulose 5-phosphate (DXP) to produce the thiazole phosphate moiety of thiamine. Sulfur is provided by the thiocarboxylate moiety of the carrier protein ThiS. In vitro, sulfur can be provided by H(2)S. This is Thiazole synthase from Cupriavidus metallidurans (strain ATCC 43123 / DSM 2839 / NBRC 102507 / CH34) (Ralstonia metallidurans).